Reading from the N-terminus, the 267-residue chain is GTP cyclohydrolase FolE2 (267 aa).

This sequence belongs to the GTP cyclohydrolase IV family.

The catalysed reaction is GTP + H2O = 7,8-dihydroneopterin 3'-triphosphate + formate + H(+). It functions in the pathway cofactor biosynthesis; 7,8-dihydroneopterin triphosphate biosynthesis; 7,8-dihydroneopterin triphosphate from GTP: step 1/1. In terms of biological role, converts GTP to 7,8-dihydroneopterin triphosphate. This chain is GTP cyclohydrolase FolE2, found in Cupriavidus necator (strain ATCC 17699 / DSM 428 / KCTC 22496 / NCIMB 10442 / H16 / Stanier 337) (Ralstonia eutropha).